A 594-amino-acid polypeptide reads, in one-letter code: NADH-quinone oxidoreductase subunit C/D (594 aa).

The NADH dehydrogenase I subunit C stretch occupies residues 1–185 (MTTGSALYIP…DPFSLNLAKQ (185 aa)). Residues 209–594 (DYMFLNLGPN…IDFVMADVDR (386 aa)) form an NADH dehydrogenase I subunit D region.

It in the N-terminal section; belongs to the complex I 30 kDa subunit family. In the C-terminal section; belongs to the complex I 49 kDa subunit family. NDH-1 is composed of 13 different subunits. Subunits NuoB, CD, E, F, and G constitute the peripheral sector of the complex.

The protein resides in the cell inner membrane. It carries out the reaction a quinone + NADH + 5 H(+)(in) = a quinol + NAD(+) + 4 H(+)(out). NDH-1 shuttles electrons from NADH, via FMN and iron-sulfur (Fe-S) centers, to quinones in the respiratory chain. The immediate electron acceptor for the enzyme in this species is believed to be ubiquinone. Couples the redox reaction to proton translocation (for every two electrons transferred, four hydrogen ions are translocated across the cytoplasmic membrane), and thus conserves the redox energy in a proton gradient. In Pseudomonas fluorescens (strain SBW25), this protein is NADH-quinone oxidoreductase subunit C/D.